Consider the following 288-residue polypeptide: Undecaprenyl-diphosphatase (288 aa).

8 consecutive transmembrane segments (helical) span residues 25–45, 53–73, 93–113, 121–141, 171–191, 196–216, 231–251, and 263–283; these read GITE…NEFL, FIDM…MVIY, WKLW…GLLL, LSNF…FIWI, VLSI…GIIV, SVAA…YSGL, GQAA…LFVI, and FTVF…YGAV.

Belongs to the UppP family.

The protein resides in the cell membrane. It catalyses the reaction di-trans,octa-cis-undecaprenyl diphosphate + H2O = di-trans,octa-cis-undecaprenyl phosphate + phosphate + H(+). Its function is as follows. Catalyzes the dephosphorylation of undecaprenyl diphosphate (UPP). Confers resistance to bacitracin. This Streptococcus thermophilus (strain ATCC BAA-250 / LMG 18311) protein is Undecaprenyl-diphosphatase.